We begin with the raw amino-acid sequence, 555 residues long: Formate--tetrahydrofolate ligase (555 aa).

64–71 (TPAGEGKT) is a binding site for ATP.

Belongs to the formate--tetrahydrofolate ligase family.

The catalysed reaction is (6S)-5,6,7,8-tetrahydrofolate + formate + ATP = (6R)-10-formyltetrahydrofolate + ADP + phosphate. The protein operates within one-carbon metabolism; tetrahydrofolate interconversion. The protein is Formate--tetrahydrofolate ligase of Allorhizobium ampelinum (strain ATCC BAA-846 / DSM 112012 / S4) (Agrobacterium vitis (strain S4)).